We begin with the raw amino-acid sequence, 101 residues long: NADH-quinone oxidoreductase subunit K (101 aa).

3 helical membrane-spanning segments follow: residues Leu4–Leu24, Ile30–Phe50, and Ile61–Leu81.

This sequence belongs to the complex I subunit 4L family. In terms of assembly, NDH-1 is composed of 14 different subunits. Subunits NuoA, H, J, K, L, M, N constitute the membrane sector of the complex.

It localises to the cell inner membrane. It carries out the reaction a quinone + NADH + 5 H(+)(in) = a quinol + NAD(+) + 4 H(+)(out). Functionally, NDH-1 shuttles electrons from NADH, via FMN and iron-sulfur (Fe-S) centers, to quinones in the respiratory chain. The immediate electron acceptor for the enzyme in this species is believed to be ubiquinone. Couples the redox reaction to proton translocation (for every two electrons transferred, four hydrogen ions are translocated across the cytoplasmic membrane), and thus conserves the redox energy in a proton gradient. This is NADH-quinone oxidoreductase subunit K from Paraburkholderia phymatum (strain DSM 17167 / CIP 108236 / LMG 21445 / STM815) (Burkholderia phymatum).